Here is a 317-residue protein sequence, read N- to C-terminus: tRNA dimethylallyltransferase (317 aa).

14–21 (GPTASGKT) contacts ATP. Residue 16–21 (TASGKT) coordinates substrate. Interaction with substrate tRNA stretches follow at residues 39-42 (DSAL) and 163-167 (QRIQR).

This sequence belongs to the IPP transferase family. Monomer. It depends on Mg(2+) as a cofactor.

The catalysed reaction is adenosine(37) in tRNA + dimethylallyl diphosphate = N(6)-dimethylallyladenosine(37) in tRNA + diphosphate. Catalyzes the transfer of a dimethylallyl group onto the adenine at position 37 in tRNAs that read codons beginning with uridine, leading to the formation of N6-(dimethylallyl)adenosine (i(6)A). The protein is tRNA dimethylallyltransferase of Stenotrophomonas maltophilia (strain R551-3).